The chain runs to 302 residues: tRNA dimethylallyltransferase (302 aa).

Residue 2-9 (GPTACGKS) participates in ATP binding. 4 to 9 (TACGKS) is a substrate binding site. Interaction with substrate tRNA stretches follow at residues 27–30 (DSAL) and 149–153 (QRLIR).

Belongs to the IPP transferase family. Monomer. Mg(2+) serves as cofactor.

The enzyme catalyses adenosine(37) in tRNA + dimethylallyl diphosphate = N(6)-dimethylallyladenosine(37) in tRNA + diphosphate. In terms of biological role, catalyzes the transfer of a dimethylallyl group onto the adenine at position 37 in tRNAs that read codons beginning with uridine, leading to the formation of N6-(dimethylallyl)adenosine (i(6)A). The sequence is that of tRNA dimethylallyltransferase from Buchnera aphidicola subsp. Acyrthosiphon pisum (strain 5A).